The sequence spans 837 residues: Neural cell adhesion molecule 2 (837 aa).

A signal peptide spans 1–19 (MSLLLSFYLLGLLVSSGQA). The Extracellular portion of the chain corresponds to 20-697 (LLQVTISLSK…PNIIKDTLFN (678 aa)). Ig-like C2-type domains follow at residues 21-108 (LQVT…ATVV), 113-202 (QKLT…RDII), 208-297 (PPAI…AFLQ), 302-396 (PHII…MYLD), and 401-491 (PKFI…YILA). 2 cysteine pairs are disulfide-bonded: Cys42/Cys93 and Cys136/Cys186. Asn177 and Asn219 each carry an N-linked (GlcNAc...) asparagine glycan. Cysteines 232 and 281 form a disulfide. Residue Asn309 is glycosylated (N-linked (GlcNAc...) asparagine). Cysteines 322 and 380 form a disulfide. 5 N-linked (GlcNAc...) asparagine glycosylation sites follow: Asn406, Asn419, Asn445, Asn474, and Asn562. Cys422 and Cys475 are disulfide-bonded. 2 Fibronectin type-III domains span residues 498–591 (SPYG…TLPV) and 593–688 (EPSP…PPKP). A helical transmembrane segment spans residues 698 to 718 (GLGLGAVIGLGVAALLLILVV). Residues 719–837 (TDVSCFFIRQ…IQSKEDDSKA (119 aa)) lie on the Cytoplasmic side of the membrane. Over residues 764–785 (GSKEPIVEMRTEDERVTNHEDG) the composition is skewed to basic and acidic residues. The disordered stretch occupies residues 764–818 (GSKEPIVEMRTEDERVTNHEDGSPVNEPNETTPLTEPEKLPLKEEDGKEALNPET). Ser765 is modified (phosphoserine). Thr780 is subject to Phosphothreonine. The residue at position 786 (Ser786) is a Phosphoserine. Residues 789 to 798 (NEPNETTPLT) show a composition bias toward low complexity. Basic and acidic residues predominate over residues 799 to 814 (EPEKLPLKEEDGKEAL).

In terms of tissue distribution, expressed most strongly in adult and fetal brain.

Its subcellular location is the cell membrane. Functionally, may play important roles in selective fasciculation and zone-to-zone projection of the primary olfactory axons. The polypeptide is Neural cell adhesion molecule 2 (NCAM2) (Homo sapiens (Human)).